The chain runs to 472 residues: ATP synthase subunit beta (472 aa).

Residue 157 to 164 (GGAGVGKT) coordinates ATP.

This sequence belongs to the ATPase alpha/beta chains family. As to quaternary structure, F-type ATPases have 2 components, CF(1) - the catalytic core - and CF(0) - the membrane proton channel. CF(1) has five subunits: alpha(3), beta(3), gamma(1), delta(1), epsilon(1). CF(0) has three main subunits: a(1), b(2) and c(9-12). The alpha and beta chains form an alternating ring which encloses part of the gamma chain. CF(1) is attached to CF(0) by a central stalk formed by the gamma and epsilon chains, while a peripheral stalk is formed by the delta and b chains.

It localises to the cell inner membrane. It catalyses the reaction ATP + H2O + 4 H(+)(in) = ADP + phosphate + 5 H(+)(out). Produces ATP from ADP in the presence of a proton gradient across the membrane. The catalytic sites are hosted primarily by the beta subunits. The sequence is that of ATP synthase subunit beta from Desulfatibacillum aliphaticivorans.